Here is a 672-residue protein sequence, read N- to C-terminus: DNA ligase (672 aa).

NAD(+) is bound by residues aspartate 30–aspartate 34, serine 79–leucine 80, and glutamate 110. Residue lysine 112 is the N6-AMP-lysine intermediate of the active site. Residues arginine 133, glutamate 170, lysine 287, and lysine 311 each coordinate NAD(+). Residues cysteine 405, cysteine 408, cysteine 423, and cysteine 429 each coordinate Zn(2+). The BRCT domain maps to alanine 590–isoleucine 672.

It belongs to the NAD-dependent DNA ligase family. LigA subfamily. It depends on Mg(2+) as a cofactor. Mn(2+) serves as cofactor.

It carries out the reaction NAD(+) + (deoxyribonucleotide)n-3'-hydroxyl + 5'-phospho-(deoxyribonucleotide)m = (deoxyribonucleotide)n+m + AMP + beta-nicotinamide D-nucleotide.. Its function is as follows. DNA ligase that catalyzes the formation of phosphodiester linkages between 5'-phosphoryl and 3'-hydroxyl groups in double-stranded DNA using NAD as a coenzyme and as the energy source for the reaction. It is essential for DNA replication and repair of damaged DNA. The protein is DNA ligase of Marinomonas sp. (strain MWYL1).